Reading from the N-terminus, the 252-residue chain is Protein UL24 homolog (252 aa).

Positions 211 to 252 (KASKSVLTKTSGENRSRASRQVAKNAPKNRIRRTAKKDAKRQ) are disordered. Residues 212-223 (ASKSVLTKTSGE) are compositionally biased toward polar residues. Positions 237–252 (PKNRIRRTAKKDAKRQ) are enriched in basic residues.

This sequence belongs to the herpesviridae UL24 family.

It is found in the virion. The protein resides in the host cytoplasm. The protein localises to the host nucleus. Its subcellular location is the host nucleolus. It localises to the host Golgi apparatus. Its function is as follows. May participate in nuclear egress of viral particles. Plays a role in the dispersal of several host nucleolar proteins including NCL/nucleolin and NPM1. Since deletion of host NCL/nucleolin negatively impact on nuclear egress, UL24 supposedly acts on this process through its effect on host nucleoli. The sequence is that of Protein UL24 homolog (U49) from Homo sapiens (Human).